The following is a 157-amino-acid chain: 2-C-methyl-D-erythritol 2,4-cyclodiphosphate synthase (157 aa).

A divalent metal cation contacts are provided by D8 and H10. 4-CDP-2-C-methyl-D-erythritol 2-phosphate-binding positions include 8–10 (DVH) and 34–35 (HS). H42 contributes to the a divalent metal cation binding site. 4-CDP-2-C-methyl-D-erythritol 2-phosphate-binding positions include 56-58 (DIG), 61-65 (FPDTD), 100-106 (AQAPKMA), 132-135 (TTEE), F139, and R142.

The protein belongs to the IspF family. In terms of assembly, homotrimer. A divalent metal cation serves as cofactor.

It catalyses the reaction 4-CDP-2-C-methyl-D-erythritol 2-phosphate = 2-C-methyl-D-erythritol 2,4-cyclic diphosphate + CMP. The protein operates within isoprenoid biosynthesis; isopentenyl diphosphate biosynthesis via DXP pathway; isopentenyl diphosphate from 1-deoxy-D-xylulose 5-phosphate: step 4/6. In terms of biological role, involved in the biosynthesis of isopentenyl diphosphate (IPP) and dimethylallyl diphosphate (DMAPP), two major building blocks of isoprenoid compounds. Catalyzes the conversion of 4-diphosphocytidyl-2-C-methyl-D-erythritol 2-phosphate (CDP-ME2P) to 2-C-methyl-D-erythritol 2,4-cyclodiphosphate (ME-CPP) with a corresponding release of cytidine 5-monophosphate (CMP). This Pseudomonas entomophila (strain L48) protein is 2-C-methyl-D-erythritol 2,4-cyclodiphosphate synthase.